Here is an 86-residue protein sequence, read N- to C-terminus: Gas vesicle protein M (86 aa).

Belongs to the gas vesicle GvpA family. As to quaternary structure, gvpF to GvpM interact with each other in vitro, and may form multi-subunit complex(es). Might interact with GvpA.

It localises to the gas vesicle. Proteins GvpF to GvpM might be involved in nucleating gas vesicle formation. A minor component of the gas vesicle. Gas vesicles are small, hollow, gas filled protein structures found in some microorganisms. They allow positioning of halobacteria at the optimal depth for growth in the poorly aerated, shallow brine pools of their habitat. In terms of biological role, expression of a 9.5 kb mc-vac DNA fragment containing 2 divergently transcribed regions (gvpD-gvpE-gvpF-gvpG-gvpH-gvpI-gvpJ-gvpK-gvpL-gvpM and gvpA-gvpC-gvpN-gvpO) allows H.volcanii to produce gas vesicles. This chain is Gas vesicle protein M, found in Haloferax mediterranei (strain ATCC 33500 / DSM 1411 / JCM 8866 / NBRC 14739 / NCIMB 2177 / R-4) (Halobacterium mediterranei).